The primary structure comprises 500 residues: Hepatic triacylglycerol lipase (500 aa).

Positions 1-21 (MENPLCVSIFLFYCILIQSSA) are cleaved as a signal peptide. Residues 23–44 (GQSLGPESFGRRSRAAETNKTP) form a disordered region. 2 N-linked (GlcNAc...) asparagine glycosylation sites follow: Asn-67 and Asn-78. Ser-168 serves as the catalytic Nucleophile. Catalysis depends on Asp-194, which acts as the Charge relay system. The essential for determining substrate specificity stretch occupies residues 254–277 (CHFLELYKHFAKHGLNAITRTVKC). Catalysis depends on His-279, which acts as the Charge relay system. The region spanning 353 to 487 (YHYQFKIRFI…HPAREKTFVR (135 aa)) is the PLAT domain. Residues Asn-363 and Asn-398 are each glycosylated (N-linked (GlcNAc...) asparagine).

The protein belongs to the AB hydrolase superfamily. Lipase family. As to quaternary structure, homodimer.

It is found in the secreted. It catalyses the reaction a triacylglycerol + H2O = a diacylglycerol + a fatty acid + H(+). It carries out the reaction a 1-acyl-sn-glycero-3-phosphocholine + H2O = sn-glycerol 3-phosphocholine + a fatty acid + H(+). The enzyme catalyses a 1,2-diacyl-sn-glycero-3-phosphocholine + H2O = a 2-acyl-sn-glycero-3-phosphocholine + a fatty acid + H(+). The catalysed reaction is 1,2,3-tri-(9Z-octadecenoyl)-glycerol + H2O = di-(9Z)-octadecenoylglycerol + (9Z)-octadecenoate + H(+). It catalyses the reaction 1,2-di-(9Z-octadecenoyl)-sn-glycero-3-phosphocholine + H2O = (9Z-octadecenoyl)-sn-glycero-3-phosphocholine + (9Z)-octadecenoate + H(+). It carries out the reaction 1,2,3-tributanoylglycerol + H2O = dibutanoylglycerol + butanoate + H(+). The enzyme catalyses 1,2-dihexadecanoyl-sn-glycero-3-phosphocholine + H2O = hexadecanoyl-sn-glycero-3-phosphocholine + hexadecanoate + H(+). The catalysed reaction is 1,2-di-(9Z-octadecenoyl)-sn-glycerol + H2O = 2-(9Z-octadecenoyl)-glycerol + (9Z)-octadecenoate + H(+). It catalyses the reaction 1,2,3-tri-(9Z-octadecenoyl)-glycerol + H2O = 2,3-di-(9Z)-octadecenoyl-sn-glycerol + (9Z)-octadecenoate + H(+). It carries out the reaction 1-(9Z-octadecenoyl)-sn-glycero-3-phospho-L-serine + H2O = sn-glycero-3-phospho-L-serine + (9Z)-octadecenoate + H(+). The enzyme catalyses 1-hexadecanoyl-sn-glycero-3-phosphocholine + H2O = sn-glycerol 3-phosphocholine + hexadecanoate + H(+). The catalysed reaction is 1,3-di-(9Z-octadecenoyl)-glycerol + H2O = 3-(9Z-octadecenoyl)-sn-glycerol + (9Z)-octadecenoate + H(+). Catalyzes the hydrolysis of triglycerides and phospholipids present in circulating plasma lipoproteins, including chylomicrons, intermediate density lipoproteins (IDL), low density lipoproteins (LDL) of large size and high density lipoproteins (HDL), releasing free fatty acids (FFA) and smaller lipoprotein particles. Also exhibits lysophospholipase activity. Can hydrolyze both neutral lipid and phospholipid substrates but shows a greater binding affinity for neutral lipid substrates than phospholipid substrates. In native LDL, preferentially hydrolyzes the phosphatidylcholine species containing polyunsaturated fatty acids at sn-2 position. The protein is Hepatic triacylglycerol lipase (LIPC) of Bos taurus (Bovine).